A 551-amino-acid polypeptide reads, in one-letter code: MSDMINIRETGYNFTTILKRLEAATSRLEDLVESGHKPLPNMHRPSRDSNSQTHNISFNIGTPTAPTVSTGSPAVASLHDQVAAAISPRNRSLTSTSAVEAVPASISAYDEFCSKYLSKYMELSKKIGGLIAEQSEHVEKAFNLLRQVLSVALKAQKPDMDSPELLEFLKPIQSELLTITNIRDEHRTAPEFNQLSTVMSGISILGWVTVEPTPLSFMSEMKDSSQFYANRVMKEFKGKDDLQIEWVRSYLTLLTELITYVKTHFKTGLTWSTKQDAVPLKTALANLSASKTQAPSSGDSANGGLPPPPPPPPPSNDFWKDSNEPAPADNKGDMGAVFAEINKGEGITSGLRKVDKSEMTHKNPNLRKTGPTPGPKPKIKSSAPSKPAETAPVKPPRIELENTKWFVENQVDNHSIVLDSVELNHSVQIFGCSNCTIIIKGKLNTVSMSNCKRTSVVVDTLVAAFDIAKCSNFGCQVMNHVPMIVIDQCDGGSIYLSKSSLSSEVVTSKSTSLNINVPNEEGDYAERAVPEQIKHKVNEKGELVSEIVRHE.

Positions Ser34 to Asn55 are disordered. At Ser92 the chain carries Phosphoserine. Thr96 bears the Phosphothreonine mark. Over residues Ser288–Ser300 the composition is skewed to polar residues. Disordered stretches follow at residues Ser288 to Asp333 and Thr348 to Pro395. Pro residues predominate over residues Leu305–Ser315. A compositionally biased stretch (basic and acidic residues) spans Arg352–His361. A C-CAP/cofactor C-like domain is found at Pro395–Val529.

This sequence belongs to the CAP family.

Its function is as follows. The N-terminal domain binds to adenylyl cyclase, thereby enabling adenylyl cyclase to be activated by upstream regulatory signals, such as Ras. The C-terminal domain is required for normal cellular morphology and growth control. This is Adenylyl cyclase-associated protein (cap1) from Schizosaccharomyces pombe (strain 972 / ATCC 24843) (Fission yeast).